The chain runs to 175 residues: NADH-ubiquinone oxidoreductase chain 6 (175 aa).

6 helical membrane passes run 1-21 (MMYI…GFSS), 24-44 (SPVY…GIIM), 51-71 (LGLV…GYTI), 87-107 (VVLS…VWLF), 113-133 (LVGF…GSFG), and 148-168 (YGFW…FIAI).

Belongs to the complex I subunit 6 family. Core subunit of respiratory chain NADH dehydrogenase (Complex I) which is composed of 45 different subunits.

It localises to the mitochondrion inner membrane. The catalysed reaction is a ubiquinone + NADH + 5 H(+)(in) = a ubiquinol + NAD(+) + 4 H(+)(out). Functionally, core subunit of the mitochondrial membrane respiratory chain NADH dehydrogenase (Complex I) which catalyzes electron transfer from NADH through the respiratory chain, using ubiquinone as an electron acceptor. Essential for the catalytic activity and assembly of complex I. The polypeptide is NADH-ubiquinone oxidoreductase chain 6 (MT-ND6) (Mammuthus primigenius (Siberian woolly mammoth)).